The primary structure comprises 275 residues: tRNA pseudouridine synthase A (275 aa).

Asp-60 functions as the Nucleophile in the catalytic mechanism. Position 119 (Tyr-119) interacts with substrate.

This sequence belongs to the tRNA pseudouridine synthase TruA family. Homodimer.

It carries out the reaction uridine(38/39/40) in tRNA = pseudouridine(38/39/40) in tRNA. In terms of biological role, formation of pseudouridine at positions 38, 39 and 40 in the anticodon stem and loop of transfer RNAs. The chain is tRNA pseudouridine synthase A from Synechocystis sp. (strain ATCC 27184 / PCC 6803 / Kazusa).